A 144-amino-acid chain; its full sequence is Ribonuclease VapC37 (144 aa).

Residues 3–137 (IVDANVLLYA…DFGRFEGVRW (135 aa)) enclose the PINc domain. 2 residues coordinate Mg(2+): Asp-5 and Asp-90.

This sequence belongs to the PINc/VapC protein family. The cofactor is Mg(2+).

It localises to the secreted. Functionally, probable toxic component of a type II toxin-antitoxin (TA) system. An RNase. Upon expression in M.smegmatis inhibits colony formation. The putative cognate antitoxin is VapB37. This chain is Ribonuclease VapC37, found in Mycobacterium tuberculosis (strain ATCC 25618 / H37Rv).